The sequence spans 98 residues: NADH-ubiquinone oxidoreductase chain 4L (98 aa).

The next 3 helical transmembrane spans lie at 1–21, 29–49, and 59–79; these read MTTM…GVFI, TLLC…LILL, and LPLI…ALLV.

Belongs to the complex I subunit 4L family. As to quaternary structure, core subunit of respiratory chain NADH dehydrogenase (Complex I) which is composed of 45 different subunits.

It localises to the mitochondrion inner membrane. It catalyses the reaction a ubiquinone + NADH + 5 H(+)(in) = a ubiquinol + NAD(+) + 4 H(+)(out). Functionally, core subunit of the mitochondrial membrane respiratory chain NADH dehydrogenase (Complex I) which catalyzes electron transfer from NADH through the respiratory chain, using ubiquinone as an electron acceptor. Part of the enzyme membrane arm which is embedded in the lipid bilayer and involved in proton translocation. This Ornithorhynchus anatinus (Duckbill platypus) protein is NADH-ubiquinone oxidoreductase chain 4L (MT-ND4L).